Here is a 754-residue protein sequence, read N- to C-terminus: uncharacterized protein (754 aa).

Catalysis depends on charge relay system residues S585 and H707. A disordered region spans residues 733–754 (SHAPPPSRKARSAARRSTDPVR).

It belongs to the peptidase S9A family.

This is an uncharacterized protein from Sinorhizobium fredii (strain NBRC 101917 / NGR234).